A 410-amino-acid polypeptide reads, in one-letter code: Argininosuccinate synthase (410 aa).

10–18 (AYSGGLDTS) serves as a coordination point for ATP. Residues Tyr88 and Ser93 each coordinate L-citrulline. Gly118 lines the ATP pocket. Positions 120, 124, and 125 each coordinate L-aspartate. L-citrulline is bound at residue Asn124. The L-citrulline site is built by Arg128, Ser177, Ser186, Glu262, and Tyr274.

This sequence belongs to the argininosuccinate synthase family. Type 1 subfamily. In terms of assembly, homotetramer.

The protein localises to the cytoplasm. It catalyses the reaction L-citrulline + L-aspartate + ATP = 2-(N(omega)-L-arginino)succinate + AMP + diphosphate + H(+). It participates in amino-acid biosynthesis; L-arginine biosynthesis; L-arginine from L-ornithine and carbamoyl phosphate: step 2/3. This Thermoanaerobacter sp. (strain X514) protein is Argininosuccinate synthase.